Consider the following 122-residue polypeptide: Large ribosomal subunit protein uL14c (122 aa).

The protein belongs to the universal ribosomal protein uL14 family. Part of the 50S ribosomal subunit.

It is found in the plastid. It localises to the chloroplast. Binds to 23S rRNA. This Nandina domestica (Heavenly bamboo) protein is Large ribosomal subunit protein uL14c.